A 157-amino-acid chain; its full sequence is Phosphopantetheine adenylyltransferase (157 aa).

Ser-8 lines the substrate pocket. ATP-binding positions include 8–9 (SF) and His-16. Substrate-binding residues include Lys-40, Thr-72, and Arg-86. Residues 87-89 (GLR), Glu-97, and 122-128 (FSFLSSS) contribute to the ATP site.

Belongs to the bacterial CoaD family. Homohexamer. Mg(2+) serves as cofactor.

It is found in the cytoplasm. The enzyme catalyses (R)-4'-phosphopantetheine + ATP + H(+) = 3'-dephospho-CoA + diphosphate. It functions in the pathway cofactor biosynthesis; coenzyme A biosynthesis; CoA from (R)-pantothenate: step 4/5. Reversibly transfers an adenylyl group from ATP to 4'-phosphopantetheine, yielding dephospho-CoA (dPCoA) and pyrophosphate. This chain is Phosphopantetheine adenylyltransferase, found in Prochlorococcus marinus (strain MIT 9211).